The chain runs to 518 residues: Lysine--tRNA ligase (518 aa).

Residues 1 to 28 (MTEPTQPNAAQPDAARPNVAPEMDDNKI) are disordered. Mg(2+)-binding residues include Glu-428 and Glu-435.

The protein belongs to the class-II aminoacyl-tRNA synthetase family. As to quaternary structure, homodimer. Mg(2+) is required as a cofactor.

The protein localises to the cytoplasm. It catalyses the reaction tRNA(Lys) + L-lysine + ATP = L-lysyl-tRNA(Lys) + AMP + diphosphate. This chain is Lysine--tRNA ligase, found in Paraburkholderia phytofirmans (strain DSM 17436 / LMG 22146 / PsJN) (Burkholderia phytofirmans).